We begin with the raw amino-acid sequence, 497 residues long: Glycerol kinase (497 aa).

Thr-12 contacts ADP. ATP-binding residues include Thr-12, Thr-13, and Ser-14. Sn-glycerol 3-phosphate is bound at residue Thr-12. ADP is bound at residue Arg-16. Residues Arg-82, Glu-83, Tyr-134, and Asp-243 each contribute to the sn-glycerol 3-phosphate site. Glycerol contacts are provided by Arg-82, Glu-83, Tyr-134, Asp-243, and Gln-244. Thr-265 and Gly-308 together coordinate ADP. 4 residues coordinate ATP: Thr-265, Gly-308, Gln-312, and Gly-409. The ADP site is built by Gly-409 and Asn-413.

Belongs to the FGGY kinase family. Homotetramer and homodimer (in equilibrium).

The enzyme catalyses glycerol + ATP = sn-glycerol 3-phosphate + ADP + H(+). Its pathway is polyol metabolism; glycerol degradation via glycerol kinase pathway; sn-glycerol 3-phosphate from glycerol: step 1/1. With respect to regulation, activated by phosphorylation and inhibited by fructose 1,6-bisphosphate (FBP). Functionally, key enzyme in the regulation of glycerol uptake and metabolism. Catalyzes the phosphorylation of glycerol to yield sn-glycerol 3-phosphate. This Thermoanaerobacter pseudethanolicus (strain ATCC 33223 / 39E) (Clostridium thermohydrosulfuricum) protein is Glycerol kinase.